A 406-amino-acid chain; its full sequence is Dual-specificity RNA methyltransferase RlmN (406 aa).

The Proton acceptor role is filled by Glu-121. Residues 127 to 377 (ERDRGTLCVS…VRTPRGRDIL (251 aa)) form the Radical SAM core domain. Cysteines 134 and 380 form a disulfide. [4Fe-4S] cluster is bound by residues Cys-141, Cys-145, and Cys-148. S-adenosyl-L-methionine-binding positions include 206–207 (GE), Ser-238, 260–262 (SLH), and Asn-337. Cys-380 serves as the catalytic S-methylcysteine intermediate.

Belongs to the radical SAM superfamily. RlmN family. Requires [4Fe-4S] cluster as cofactor.

The protein localises to the cytoplasm. It carries out the reaction adenosine(2503) in 23S rRNA + 2 reduced [2Fe-2S]-[ferredoxin] + 2 S-adenosyl-L-methionine = 2-methyladenosine(2503) in 23S rRNA + 5'-deoxyadenosine + L-methionine + 2 oxidized [2Fe-2S]-[ferredoxin] + S-adenosyl-L-homocysteine. It catalyses the reaction adenosine(37) in tRNA + 2 reduced [2Fe-2S]-[ferredoxin] + 2 S-adenosyl-L-methionine = 2-methyladenosine(37) in tRNA + 5'-deoxyadenosine + L-methionine + 2 oxidized [2Fe-2S]-[ferredoxin] + S-adenosyl-L-homocysteine. Its function is as follows. Specifically methylates position 2 of adenine 2503 in 23S rRNA and position 2 of adenine 37 in tRNAs. m2A2503 modification seems to play a crucial role in the proofreading step occurring at the peptidyl transferase center and thus would serve to optimize ribosomal fidelity. This chain is Dual-specificity RNA methyltransferase RlmN, found in Azorhizobium caulinodans (strain ATCC 43989 / DSM 5975 / JCM 20966 / LMG 6465 / NBRC 14845 / NCIMB 13405 / ORS 571).